A 318-amino-acid polypeptide reads, in one-letter code: Fe(3+) dicitrate transport system permease protein FecD (318 aa).

The Cytoplasmic segment spans residues 1–2; the sequence is MK. The helical transmembrane segment at 3–23 threads the bilayer; sequence IALVIFITLALAGCALLSLHM. Topologically, residues 24–55 are periplasmic; the sequence is GVIPVPWRALLTDWQAGHEHYYVLMEYRLPRL. A helical transmembrane segment spans residues 56-76; the sequence is LLALFVGAALAVAGVLIQGIV. Topologically, residues 77-105 are cytoplasmic; that stretch reads RNPLASPDILGVNHAASLASVGALLLMPS. The chain crosses the membrane as a helical span at residues 106–126; the sequence is LPVMVLPLLAFAGGMAGLILL. Residues 127–137 are Periplasmic-facing; it reads KMLAKTHQPMK. The chain crosses the membrane as a helical span at residues 138-158; the sequence is LALTGVALSACWASLTDYLML. Over 159–179 the chain is Cytoplasmic; the sequence is SRPQDVNNALLWLTGSLWGRD. A helical transmembrane segment spans residues 180 to 200; that stretch reads WSFVKIAIPLMILFLPLSLSF. The Periplasmic portion of the chain corresponds to 201 to 225; sequence CRDLDLLALGDARATTLGVSVPHTR. A helical transmembrane segment spans residues 226–246; sequence FWALLLAVAMTSTGVAACGPI. The Cytoplasmic portion of the chain corresponds to 247-269; the sequence is SFIGLVVPHMMRSITGGRHRRLL. Residues 270–290 form a helical membrane-spanning segment; the sequence is PVSALTGALLLVVADLLARII. At 291–294 the chain is on the periplasmic side; the sequence is HPPL. A helical membrane pass occupies residues 295-315; sequence ELPVGVLTAIIGAPWFVWLLV. Residues 316–318 lie on the Cytoplasmic side of the membrane; the sequence is RMR.

Belongs to the binding-protein-dependent transport system permease family. FecCD subfamily. In terms of assembly, the complex is composed of two ATP-binding proteins (FecE), two transmembrane proteins (FecC and FecD) and a solute-binding protein (FecB). Interacts with FecB.

It is found in the cell inner membrane. In terms of biological role, part of the ABC transporter complex FecBCDE involved in citrate-dependent Fe(3+) uptake. Probably responsible for the translocation of the substrate across the membrane. The chain is Fe(3+) dicitrate transport system permease protein FecD from Escherichia coli (strain K12).